Here is a 57-residue protein sequence, read N- to C-terminus: Protein translocase subunit SecE (57 aa).

A helical transmembrane segment spans residues 33–53 (GAGIFLVGLLGFIIFAVMSFL).

Belongs to the SecE/SEC61-gamma family. Component of the Sec protein translocase complex. Heterotrimer consisting of SecY (alpha), SecG (beta) and SecE (gamma) subunits. The heterotrimers can form oligomers, although 1 heterotrimer is thought to be able to translocate proteins. Interacts with the ribosome. May interact with SecDF, and other proteins may be involved.

Its subcellular location is the cell membrane. Functionally, essential subunit of the Sec protein translocation channel SecYEG. Clamps together the 2 halves of SecY. May contact the channel plug during translocation. This Haloferax mediterranei (strain ATCC 33500 / DSM 1411 / JCM 8866 / NBRC 14739 / NCIMB 2177 / R-4) (Halobacterium mediterranei) protein is Protein translocase subunit SecE.